The sequence spans 170 residues: Mediator of RNA polymerase II transcription subunit 10 (170 aa).

It belongs to the Mediator complex subunit 10 family. As to quaternary structure, component of the Mediator complex.

The protein localises to the nucleus. Its function is as follows. Component of the Mediator complex, a coactivator involved in the regulated transcription of nearly all RNA polymerase II-dependent genes. Mediator functions as a bridge to convey information from gene-specific regulatory proteins to the basal RNA polymerase II transcription machinery. Mediator is recruited to promoters by direct interactions with regulatory proteins and serves as a scaffold for the assembly of a functional preinitiation complex with RNA polymerase II and the general transcription factors. The polypeptide is Mediator of RNA polymerase II transcription subunit 10 (NUT2) (Candida albicans (strain SC5314 / ATCC MYA-2876) (Yeast)).